Consider the following 152-residue polypeptide: Deoxyuridine 5'-triphosphate nucleotidohydrolase (152 aa).

Substrate-binding positions include 72–74 (RSG), N85, and 89–91 (TID).

It belongs to the dUTPase family. Requires Mg(2+) as cofactor.

The enzyme catalyses dUTP + H2O = dUMP + diphosphate + H(+). It functions in the pathway pyrimidine metabolism; dUMP biosynthesis; dUMP from dCTP (dUTP route): step 2/2. In terms of biological role, this enzyme is involved in nucleotide metabolism: it produces dUMP, the immediate precursor of thymidine nucleotides and it decreases the intracellular concentration of dUTP so that uracil cannot be incorporated into DNA. In Rhodopseudomonas palustris (strain HaA2), this protein is Deoxyuridine 5'-triphosphate nucleotidohydrolase.